Consider the following 396-residue polypeptide: MRGYLLEFATIFTETLLFIMPYIHSLSATELASNSQKKVIVGMSGGVDSSVSAYILLQQGYQVEGLFMKNWEEDDNDEYCAAADDLKDAQAVADKLGIVLHQINFAAEYWDNVFEYFLEEYKSGRTPNPDIMCNKEIKFKAFLEFAAEELEADYIATGHYVRRREVDGHWQMLRGMDDNKDQSYFLYTLGEQHVGQTLFPIGDIEKPQVREIAQEQGLITHDKKDSTGICFIGERKFTDFLSQYLPAQPGVIETPEGQEIGQHQGLMYHTLGQRKGLMIGGMKEFGDDPWYVVDKDMARNVLIVGQGADHPRLYSNGLIANQLHWVDRTGPTSPMKCSVKTRYRQEDIACTLTPEPDGNVRVMFDEPQKAVTPGQSAVFYLNEVCLGGGIIESYIR.

ATP contacts are provided by residues 42 to 49 and Met-68; that span reads GMSGGVDS. An interaction with target base in tRNA region spans residues 128 to 130; the sequence is NPD. The Nucleophile role is filled by Cys-133. Cysteines 133 and 230 form a disulfide. Position 158 (Gly-158) interacts with ATP. The interval 180–182 is interaction with tRNA; the sequence is KDQ. Cys-230 (cysteine persulfide intermediate) is an active-site residue. The interval 342 to 343 is interaction with tRNA; that stretch reads RY.

Belongs to the MnmA/TRMU family.

The protein resides in the cytoplasm. The catalysed reaction is S-sulfanyl-L-cysteinyl-[protein] + uridine(34) in tRNA + AH2 + ATP = 2-thiouridine(34) in tRNA + L-cysteinyl-[protein] + A + AMP + diphosphate + H(+). In terms of biological role, catalyzes the 2-thiolation of uridine at the wobble position (U34) of tRNA, leading to the formation of s(2)U34. The sequence is that of tRNA-specific 2-thiouridylase MnmA from Pseudoalteromonas atlantica (strain T6c / ATCC BAA-1087).